An 844-amino-acid polypeptide reads, in one-letter code: RNA-directed RNA polymerase (844 aa).

248 to 255 (GLPYIGKT) serves as a coordination point for GTP. Residues 384–588 (MIYADNIYIL…ENERLIASVA (205 aa)) enclose the RdRp catalytic domain. The disordered stretch occupies residues 820–844 (EFSEKIPLTPTQKKNAKRREKQRRN). Residues 833–844 (KNAKRREKQRRN) show a composition bias toward basic residues.

Interacts with VP3 in the cytoplasm. In terms of processing, exists in multiple phosphorylated forms.

It localises to the virion. The enzyme catalyses RNA(n) + a ribonucleoside 5'-triphosphate = RNA(n+1) + diphosphate. In terms of biological role, RNA-dependent RNA polymerase which is found both free and covalently attached to the genomic RNA. May also contain guanylyl and methyl transferase activities. The protein is RNA-directed RNA polymerase (VP1) of Infectious pancreatic necrosis virus (strain Sp) (IPNV).